The primary structure comprises 152 residues: Transcriptional regulator MraZ (152 aa).

2 consecutive SpoVT-AbrB domains span residues 5-52 and 81-124; these read ASAI…PVQE and AHEC…DEAA.

This sequence belongs to the MraZ family. In terms of assembly, forms oligomers.

It is found in the cytoplasm. The protein resides in the nucleoid. The sequence is that of Transcriptional regulator MraZ from Shewanella piezotolerans (strain WP3 / JCM 13877).